The primary structure comprises 307 residues: Acyl transferase (307 aa).

Active-site charge relay system residues include serine 116, aspartate 213, and histidine 243.

Belongs to the LuxD family.

It functions in the pathway lipid metabolism; fatty acid reduction for biolumincescence. Functionally, acyl transferase is part of the fatty acid reductase system required for aldehyde biosynthesis; it produces fatty acids for the luminescent reaction. The chain is Acyl transferase from Photorhabdus laumondii subsp. laumondii (strain DSM 15139 / CIP 105565 / TT01) (Photorhabdus luminescens subsp. laumondii).